The chain runs to 674 residues: Probable nucleolar GTP-binding protein 1 (674 aa).

An OBG-type G domain is found at 169–346 (RTLLLTGYPN…VKDTACSILF (178 aa)). GTP contacts are provided by residues 175–182 (GYPNVGKS), 221–225 (DTPGI), and 289–292 (NKID). A compositionally biased stretch (basic and acidic residues) spans 518–527 (RINHQIKDSS). Disordered stretches follow at residues 518–538 (RINH…RRGI) and 564–674 (VRDH…NDFR). The span at 570–580 (SRISGKKRSRS) shows a compositional bias: basic residues. Composition is skewed to basic and acidic residues over residues 619–633 (GFHD…DKLD) and 641–653 (NQDG…DRHV).

It belongs to the TRAFAC class OBG-HflX-like GTPase superfamily. OBG GTPase family. NOG subfamily.

It localises to the nucleus. The protein localises to the nucleolus. Functionally, involved in the biogenesis of the 60S ribosomal subunit. The sequence is that of Probable nucleolar GTP-binding protein 1 (nog1) from Dictyostelium discoideum (Social amoeba).